Here is a 231-residue protein sequence, read N- to C-terminus: Cytochrome c oxidase subunit 2 (231 aa).

The Mitochondrial intermembrane segment spans residues 1 to 14 (MAHPVHVGLKEATS). A helical membrane pass occupies residues 15–45 (PFMEELIAFHDHTLMIIFLISSLVLYIISMM). Topologically, residues 46 to 59 (LTTKLTHTSTMNAQ) are mitochondrial matrix. A helical membrane pass occupies residues 60–87 (EIEIIWTILPAIILIMIALPSLRILYMT). Residues 88-231 (DEFNKPYLTL…WASYLYIVSL (144 aa)) lie on the Mitochondrial intermembrane side of the membrane. His161, Cys196, Glu198, Cys200, His204, and Met207 together coordinate Cu cation. A Mg(2+)-binding site is contributed by Glu198.

The protein belongs to the cytochrome c oxidase subunit 2 family. In terms of assembly, component of the cytochrome c oxidase (complex IV, CIV), a multisubunit enzyme composed of 14 subunits. The complex is composed of a catalytic core of 3 subunits MT-CO1, MT-CO2 and MT-CO3, encoded in the mitochondrial DNA, and 11 supernumerary subunits COX4I, COX5A, COX5B, COX6A, COX6B, COX6C, COX7A, COX7B, COX7C, COX8 and NDUFA4, which are encoded in the nuclear genome. The complex exists as a monomer or a dimer and forms supercomplexes (SCs) in the inner mitochondrial membrane with NADH-ubiquinone oxidoreductase (complex I, CI) and ubiquinol-cytochrome c oxidoreductase (cytochrome b-c1 complex, complex III, CIII), resulting in different assemblies (supercomplex SCI(1)III(2)IV(1) and megacomplex MCI(2)III(2)IV(2)). Found in a complex with TMEM177, COA6, COX18, COX20, SCO1 and SCO2. Interacts with TMEM177 in a COX20-dependent manner. Interacts with COX20. Interacts with COX16. The cofactor is Cu cation.

It localises to the mitochondrion inner membrane. The enzyme catalyses 4 Fe(II)-[cytochrome c] + O2 + 8 H(+)(in) = 4 Fe(III)-[cytochrome c] + 2 H2O + 4 H(+)(out). Component of the cytochrome c oxidase, the last enzyme in the mitochondrial electron transport chain which drives oxidative phosphorylation. The respiratory chain contains 3 multisubunit complexes succinate dehydrogenase (complex II, CII), ubiquinol-cytochrome c oxidoreductase (cytochrome b-c1 complex, complex III, CIII) and cytochrome c oxidase (complex IV, CIV), that cooperate to transfer electrons derived from NADH and succinate to molecular oxygen, creating an electrochemical gradient over the inner membrane that drives transmembrane transport and the ATP synthase. Cytochrome c oxidase is the component of the respiratory chain that catalyzes the reduction of oxygen to water. Electrons originating from reduced cytochrome c in the intermembrane space (IMS) are transferred via the dinuclear copper A center (CU(A)) of subunit 2 and heme A of subunit 1 to the active site in subunit 1, a binuclear center (BNC) formed by heme A3 and copper B (CU(B)). The BNC reduces molecular oxygen to 2 water molecules using 4 electrons from cytochrome c in the IMS and 4 protons from the mitochondrial matrix. This chain is Cytochrome c oxidase subunit 2 (MT-CO2), found in Brachyteles hypoxanthus (Northern muriqui).